We begin with the raw amino-acid sequence, 468 residues long: Purple acid phosphatase 10 (468 aa).

Residues 1-25 (MGRVRKSDFGSIVLVLCCVLNSLLC) form the signal peptide. N-linked (GlcNAc...) asparagine glycosylation is found at Asn95 and Asn113. Position 167 (Asp167) interacts with Fe cation. An N-linked (GlcNAc...) asparagine glycan is attached at Asn175. Residues Asp196 and Tyr199 each contribute to the Fe cation site. Asp196 lines the Zn(2+) pocket. Asn233 provides a ligand contact to Zn(2+). Asn233 contributes to the substrate binding site. Asn306 carries N-linked (GlcNAc...) asparagine glycosylation. Residue His318 coordinates Zn(2+). The active-site Proton donor is the His328. Residue His355 coordinates Zn(2+). 355–357 (HVH) contributes to the substrate binding site. His357 lines the Fe cation pocket. Asn428 carries N-linked (GlcNAc...) asparagine glycosylation.

It belongs to the metallophosphoesterase superfamily. Purple acid phosphatase family. In terms of assembly, homodimer; disulfide-linked. It depends on Fe cation as a cofactor. Zn(2+) is required as a cofactor. In terms of tissue distribution, expressed in roots, stems, leaves, flowers and siliques.

The protein resides in the secreted. The protein localises to the cytoplasm. The enzyme catalyses a phosphate monoester + H2O = an alcohol + phosphate. The sequence is that of Purple acid phosphatase 10 (PAP10) from Arabidopsis thaliana (Mouse-ear cress).